The chain runs to 382 residues: Probable trehalose-phosphate phosphatase 2 (382 aa).

Belongs to the trehalose phosphatase family. The cofactor is a divalent metal cation. As to expression, expressed in roots and shoots.

It catalyses the reaction alpha,alpha-trehalose 6-phosphate + H2O = alpha,alpha-trehalose + phosphate. It functions in the pathway glycan biosynthesis; trehalose biosynthesis. In terms of biological role, removes the phosphate from trehalose 6-phosphate to produce free trehalose. Trehalose accumulation in plant may improve abiotic stress tolerance. The sequence is that of Probable trehalose-phosphate phosphatase 2 (TPP2) from Oryza sativa subsp. japonica (Rice).